Reading from the N-terminus, the 354-residue chain is Uroporphyrinogen decarboxylase (354 aa).

Residues 27–31 (RQAGR), Asp-77, Tyr-154, Ser-209, and His-327 contribute to the substrate site.

The protein belongs to the uroporphyrinogen decarboxylase family. In terms of assembly, homodimer.

Its subcellular location is the cytoplasm. It carries out the reaction uroporphyrinogen III + 4 H(+) = coproporphyrinogen III + 4 CO2. It participates in porphyrin-containing compound metabolism; protoporphyrin-IX biosynthesis; coproporphyrinogen-III from 5-aminolevulinate: step 4/4. In terms of biological role, catalyzes the decarboxylation of four acetate groups of uroporphyrinogen-III to yield coproporphyrinogen-III. The chain is Uroporphyrinogen decarboxylase from Pseudomonas syringae pv. syringae (strain B728a).